The sequence spans 281 residues: Energy-coupling factor transporter ATP-binding protein EcfA1 (281 aa).

The region spanning 6–245 is the ABC transporter domain; the sequence is IKSEDLVFKY…VEKIKSIGLD (240 aa). Residue 44–51 coordinates ATP; that stretch reads GHNGSGKS.

The protein belongs to the ABC transporter superfamily. Energy-coupling factor EcfA family. Forms a stable energy-coupling factor (ECF) transporter complex composed of 2 membrane-embedded substrate-binding proteins (S component), 2 ATP-binding proteins (A component) and 2 transmembrane proteins (T component).

Its subcellular location is the cell membrane. Its function is as follows. ATP-binding (A) component of a common energy-coupling factor (ECF) ABC-transporter complex. Unlike classic ABC transporters this ECF transporter provides the energy necessary to transport a number of different substrates. This chain is Energy-coupling factor transporter ATP-binding protein EcfA1, found in Clostridium perfringens (strain ATCC 13124 / DSM 756 / JCM 1290 / NCIMB 6125 / NCTC 8237 / Type A).